Reading from the N-terminus, the 506-residue chain is Gallate 1-beta-glucosyltransferase 84A23 (506 aa).

Catalysis depends on His20, which acts as the Proton acceptor. His20 contributes to the an anthocyanidin binding site. UDP-alpha-D-glucose contacts are provided by Gln345, His360, Trp363, Asn364, Ser365, and Glu368. Gly383 lines the an anthocyanidin pocket. UDP-alpha-D-glucose-binding residues include Asp384 and Gln385.

It belongs to the UDP-glycosyltransferase family. Expressed in roots of the seedlings.

The protein resides in the cytoplasm. It carries out the reaction 3,4,5-trihydroxybenzoate + UDP-alpha-D-glucose = 1-O-galloyl-beta-D-glucose + UDP. The enzyme catalyses 3,4-dihydroxybenzoate + UDP-alpha-D-glucose = 1-O-(3,4-dihydroxy-benzoyl)-beta-D-glucose + UDP. It catalyses the reaction 4-hydroxybenzoate + UDP-alpha-D-glucose = 4-(beta-D-glucosyloxy)benzoate + UDP + H(+). The catalysed reaction is (E)-cinnamate + UDP-alpha-D-glucose = 1-O-(trans-cinnamoyl)-beta-D-glucose + UDP. It carries out the reaction (E)-sinapate + UDP-alpha-D-glucose = 1-O-(trans-sinapoyl)-beta-D-glucose + UDP. The enzyme catalyses (E)-4-coumarate + UDP-alpha-D-glucose = 1-O-(trans-4-coumaroyl)-beta-D-glucose + UDP. It catalyses the reaction (E)-caffeate + UDP-alpha-D-glucose = 1-O-[(E)-caffeoyl]-beta-D-glucose + UDP. The catalysed reaction is (E)-ferulate + UDP-alpha-D-glucose = 1-O-[(E)-feruloyl]-beta-D-glucose + UDP. It carries out the reaction genistein + UDP-alpha-D-glucose = genistein 7-O-beta-D-glucoside + UDP + H(+). The enzyme catalyses apigenin + UDP-alpha-D-glucose = apigenin 7-O-beta-D-glucoside + UDP + H(+). It catalyses the reaction luteolin + UDP-alpha-D-glucose = luteolin 7-O-beta-D-glucoside + UDP + H(+). In terms of biological role, glucosyltransferase that catalyzes the formation of 1-O-beta-D-glucose esters with hydroxybenzoic acids and cinnamic acid including its derivatives as preferred glucosyl acceptors. Has significant activity with gallic acid (3,4,5-trihydroxybenzoic acid), 3,4-dihydroxybenzoic acid, 4-hydroxybenzoic acid, cinnamic acid, sinapic acid, coumaric acid, caffeic acid and ferulic acid in vitro. Gallic acid is the predicted native substrate of the enzyme, which thus catalyzes the formation of 1-O-galloyl-beta-D-glucose, the first committed step of hydrolyzable tannins (HTs) biosynthesis, with punicalagin isomers being the major HTs of pomegranate. Catalyzes the formation of flavonoid glucosides with genistein, apigenin and luteolin in vitro. Has low activity with benzoic acid, 2-hydroxybenzoic acid, 3-hydroxybenzoic acid, 2,4-dihydroxybenzoic acid, naringenin and quercetin. No activity with catechol, resveratrol, chlorogenic acid, catechin and epicatechin (building blocks of proanthocyanidins) or cyanidin, delphinidin and pelargonidin (the three anthocyanidins). This chain is Gallate 1-beta-glucosyltransferase 84A23, found in Punica granatum (Pomegranate).